The following is a 198-amino-acid chain: Small ribosomal subunit protein uS4 (198 aa).

In terms of domain architecture, S4 RNA-binding spans Ser91–Glu151.

It belongs to the universal ribosomal protein uS4 family. Part of the 30S ribosomal subunit. Contacts protein S5. The interaction surface between S4 and S5 is involved in control of translational fidelity.

Functionally, one of the primary rRNA binding proteins, it binds directly to 16S rRNA where it nucleates assembly of the body of the 30S subunit. In terms of biological role, with S5 and S12 plays an important role in translational accuracy. This chain is Small ribosomal subunit protein uS4, found in Phytoplasma australiense.